A 267-amino-acid chain; its full sequence is NAD kinase 2 (267 aa).

Aspartate 52 acts as the Proton acceptor in catalysis. NAD(+) is bound by residues 52 to 53 (DG), 124 to 125 (NE), arginine 151, aspartate 153, 164 to 169 (TGYNKS), and alanine 188.

This sequence belongs to the NAD kinase family. A divalent metal cation serves as cofactor.

It is found in the cytoplasm. The catalysed reaction is NAD(+) + ATP = ADP + NADP(+) + H(+). Involved in the regulation of the intracellular balance of NAD and NADP, and is a key enzyme in the biosynthesis of NADP. Catalyzes specifically the phosphorylation on 2'-hydroxyl of the adenosine moiety of NAD to yield NADP. The polypeptide is NAD kinase 2 (Geobacillus kaustophilus (strain HTA426)).